The following is a 316-amino-acid chain: MST50-interacting protein 11 (316 aa).

WD repeat units lie at residues 13–53, 61–100, 103–142, 146–187, 190–229, 231–269, and 281–316; these read GHNG…TSYG, GHSH…TTRR, GHTN…KYTI, GHSE…LQTD, GHTG…HLYS, NAND…KVDE, and SREP…MSRA.

This sequence belongs to the WD repeat G protein beta family. Ribosomal protein RACK1 subfamily. In terms of assembly, interacts with MST50 and MCK1.

Functionally, involved in regulating the cell wall integrity and MPS1 activation via its interaction with the MAPKKK MCK1. The chain is MST50-interacting protein 11 from Pyricularia oryzae (strain 70-15 / ATCC MYA-4617 / FGSC 8958) (Rice blast fungus).